The sequence spans 410 residues: Protein CNPPD1 (410 aa).

A helical transmembrane segment spans residues 233-253; it reads CLLAVAYVSSVALAVASVAVI.

The protein belongs to the CNPPD1 family.

It is found in the membrane. This is Protein CNPPD1 (CNPPD1) from Pongo abelii (Sumatran orangutan).